Consider the following 264-residue polypeptide: Aminoglycoside 3'-phosphotransferase (264 aa).

Residue D190 is the Proton acceptor of the active site.

This sequence belongs to the aminoglycoside phosphotransferase family.

The catalysed reaction is kanamycin A + ATP = kanamycin 3'-phosphate + ADP + H(+). Functionally, resistance to kanamycin and structurally-related aminoglycosides, including amikacin. This Enterococcus faecalis (Streptococcus faecalis) protein is Aminoglycoside 3'-phosphotransferase (aphA).